A 502-amino-acid chain; its full sequence is Glutamate decarboxylase (502 aa).

K278 carries the N6-(pyridoxal phosphate)lysine modification. Residues 471–502 (GLHHFHMDTVETQKDIIKHWRKIAGKKTSGVC) form a calmodulin-binding region.

The protein belongs to the group II decarboxylase family. The cofactor is pyridoxal 5'-phosphate.

The enzyme catalyses L-glutamate + H(+) = 4-aminobutanoate + CO2. Catalyzes the production of GABA. The calmodulin-binding is calcium-dependent and it is proposed that this may, directly or indirectly, form a calcium regulated control of GABA biosynthesis. This Solanum lycopersicum (Tomato) protein is Glutamate decarboxylase.